Here is a 245-residue protein sequence, read N- to C-terminus: Protein DEHYDRATION-INDUCED 19 homolog 4 (245 aa).

Belongs to the Di19 family.

The chain is Protein DEHYDRATION-INDUCED 19 homolog 4 (DI19-4) from Oryza sativa subsp. japonica (Rice).